The chain runs to 330 residues: Delta-aminolevulinic acid dehydratase (330 aa).

Residues Cys-122, Cys-124, His-131, and Cys-132 each coordinate Zn(2+). The Schiff-base intermediate with substrate role is filled by Lys-199. Lys-199 carries the N6-succinyllysine modification. Residue Arg-209 coordinates 5-aminolevulinate. Ser-215 is subject to Phosphoserine. A 5-aminolevulinate-binding site is contributed by Arg-221. Cys-223 is a Zn(2+) binding site. The active-site Schiff-base intermediate with substrate is Lys-252. Lys-252 carries the N6-succinyllysine modification. Residue Ser-279 coordinates 5-aminolevulinate.

The protein belongs to the ALAD family. In terms of assembly, homooctamer; active form. Homohexamer; low activity form. Requires Zn(2+) as cofactor.

The protein localises to the cytoplasm. It is found in the cytosol. The enzyme catalyses 2 5-aminolevulinate = porphobilinogen + 2 H2O + H(+). It participates in porphyrin-containing compound metabolism; protoporphyrin-IX biosynthesis; coproporphyrinogen-III from 5-aminolevulinate: step 1/4. With respect to regulation, can alternate between a fully active homooctamer and a low-activity homohexamer. A bound magnesium ion may promote the assembly of the fully active homooctamer. The magnesium-binding site is absent in the low-activity homohexamer. Inhibited by compounds that favor the hexameric state. Inhibited by divalent lead ions. The lead ions partially displace the zinc cofactor. In terms of biological role, catalyzes an early step in the biosynthesis of tetrapyrroles. Binds two molecules of 5-aminolevulinate per subunit, each at a distinct site, and catalyzes their condensation to form porphobilinogen. The sequence is that of Delta-aminolevulinic acid dehydratase (ALAD) from Pongo abelii (Sumatran orangutan).